Reading from the N-terminus, the 220-residue chain is 2-hydroxy-3-keto-5-methylthiopentenyl-1-phosphate phosphatase (220 aa).

It belongs to the HAD-like hydrolase superfamily. MtnX family.

The enzyme catalyses 2-hydroxy-5-methylsulfanyl-3-oxopent-1-enyl phosphate + H2O = 1,2-dihydroxy-5-(methylsulfanyl)pent-1-en-3-one + phosphate. It participates in amino-acid biosynthesis; L-methionine biosynthesis via salvage pathway; L-methionine from S-methyl-5-thio-alpha-D-ribose 1-phosphate: step 4/6. In terms of biological role, dephosphorylates 2-hydroxy-3-keto-5-methylthiopentenyl-1-phosphate (HK-MTPenyl-1-P) yielding 1,2-dihydroxy-3-keto-5-methylthiopentene (DHK-MTPene). This chain is 2-hydroxy-3-keto-5-methylthiopentenyl-1-phosphate phosphatase, found in Geobacillus thermodenitrificans (strain NG80-2).